The primary structure comprises 245 residues: 8-amino-3,8-dideoxy-manno-octulosonate cytidylyltransferase (245 aa).

It belongs to the KdsB family.

The protein resides in the cytoplasm. The enzyme catalyses 8-amino-3,8-dideoxy-alpha-D-manno-octulosonate + CTP = CMP-8-amino-3,8-dideoxy-alpha-D-manno-oct-2-ulosonate + diphosphate. It functions in the pathway bacterial outer membrane biogenesis; lipopolysaccharide biosynthesis. Functionally, activates KDO8N (a required 8-carbon sugar) for incorporation into bacterial lipopolysaccharide in the Shewanella genus. The protein is 8-amino-3,8-dideoxy-manno-octulosonate cytidylyltransferase of Shewanella loihica (strain ATCC BAA-1088 / PV-4).